Consider the following 186-residue polypeptide: ADP-ribosylation factor-like protein 8B (186 aa).

An N-acetylmethionine modification is found at methionine 1. Residues methionine 1 to glutamate 19 constitute an intramembrane region (note=Mediates targeting to membranes). GTP is bound by residues glutamine 29–threonine 35, aspartate 71–glutamine 75, and asparagine 130–aspartate 133. A Glycyl lysine isopeptide (Lys-Gly) (interchain with G-Cter in ubiquitin) cross-link involves residue lysine 141.

Belongs to the small GTPase superfamily. Arf family. Interacts with tubulin. Interacts with BORCS5; recruits ARL8B to lysosomes. Interacts with VPS41; the interaction mediates the recruitment of the HOPS complex to lysosomes. Interacts (GTP-bound form) with PLEKHM2 (via RUN domain); the interaction is required to recruit the motor protein kinesin-1 on lysosomes. Interacts (GTP-bound form) with PLEKHM1 (via RUN domain); the interaction is required for PLEKHM1 localization to lysosomes and for ARL8B function in delivery and degradation of endocytic and autophagic cargo in lysosomes. PLEKHM1 and PLEKHM2 compete for interaction with ARL8B. Interacts (GTP-bound form) with RUFY1; the interaction is required for RUFY1 endosomal location. When GTP-bound, interacts with RUFY3 and RUFY4, but not with RUFY1, nor RUFY2. Post-translationally, ubiquitinated at Lys-141 by RNF167, leading to its degradation. Ubiquitously expressed.

The protein resides in the late endosome membrane. Its subcellular location is the lysosome membrane. The protein localises to the cytoplasm. It localises to the cytoskeleton. It is found in the spindle. The protein resides in the cell projection. Its subcellular location is the axon. The protein localises to the synapse. It localises to the cytolytic granule membrane. It is found in the early endosome membrane. It carries out the reaction GTP + H2O = GDP + phosphate + H(+). Functionally, small GTPase which cycles between active GTP-bound and inactive GDP-bound states. In its active state, binds to a variety of effector proteins playing a key role in the regulation of lysosomal positioning which is important for nutrient sensing, natural killer cell-mediated cytotoxicity and antigen presentation. Along with its effectors, orchestrates lysosomal transport and fusion. Localizes specifically to lysosomal membranes and mediates anterograde lysosomal motility by recruiting PLEKHM2, which in turn recruits the motor protein kinesin-1 on lysosomes. Required for lysosomal and cytolytic granule exocytosis. Critical factor involved in NK cell-mediated cytotoxicity. Drives the polarization of cytolytic granules and microtubule-organizing centers (MTOCs) toward the immune synapse between effector NK lymphocytes and target cells. In neurons, mediates the anterograde axonal long-range transport of presynaptic lysosome-related vesicles required for presynaptic biogenesis and synaptic function. Also acts as a regulator of endosome to lysosome trafficking pathways of special significance for host defense. Recruits RUFY1 onto early endosomes regulating endosomes to trans-Golgi network proteins retrieval. Regulates cargo trafficking to lysosomes by binding to PLEKHM1 and recruiting the HOPS subunit VPS41, resulting in functional assembly of the HOPS complex on lysosomal membranes. Plays an important role in cargo delivery to lysosomes for antigen presentation and microbial killing. Directs the intersection of CD1d with lipid antigens in lysosomes, and plays a role in intersecting phagosomes with lysosomes to generate phagolysosomes that kill microbes. Involved in the process of MHC II presentation. Regulates the delivery of antigens to lysosomes and the formation of MHC II-peptide complexes through the recruitment of the HOPS complex to lysosomes allowing the fusion of late endosomes to lysosomes. May play a role in chromosome segregation. Its function is as follows. (Microbial infection) During Mycobacterium tuberculosis (Mtb) infection, is required for plasma membrane repair by controlling the exocytosis of lysosomes in macrophages. ARL8B secretion pathway is crucial to control the type of cell death of the M.tuberculosis-infected macrophages, distinguishing avirulent from virulent Mtb induced necrotic cell death. In terms of biological role, (Microbial infection) During infection, coronaviruses such as SARS-CoV-2 and the chaperone HSPA5/GRP78 are probably co-released through ARL8B-dependent lysosomal exocytic pathway for unconventional egress. The polypeptide is ADP-ribosylation factor-like protein 8B (Homo sapiens (Human)).